Reading from the N-terminus, the 339-residue chain is tRNA N6-adenosine threonylcarbamoyltransferase (339 aa).

Residues H111 and H115 each contribute to the Fe cation site. Residues 134–138 (LVSGG), D167, G180, and N272 contribute to the substrate site. D300 is a binding site for Fe cation.

This sequence belongs to the KAE1 / TsaD family. The cofactor is Fe(2+).

It is found in the cytoplasm. The catalysed reaction is L-threonylcarbamoyladenylate + adenosine(37) in tRNA = N(6)-L-threonylcarbamoyladenosine(37) in tRNA + AMP + H(+). In terms of biological role, required for the formation of a threonylcarbamoyl group on adenosine at position 37 (t(6)A37) in tRNAs that read codons beginning with adenine. Is involved in the transfer of the threonylcarbamoyl moiety of threonylcarbamoyl-AMP (TC-AMP) to the N6 group of A37, together with TsaE and TsaB. TsaD likely plays a direct catalytic role in this reaction. This is tRNA N6-adenosine threonylcarbamoyltransferase from Vibrio vulnificus (strain YJ016).